The chain runs to 256 residues: Nuclear shuttle protein (256 aa).

Residues 21–42 (HSTGKRSRNVSRIDFKRRSSKY) carry the Bipartite nuclear localization signal motif. A Nuclear localization signal motif is present at residues 81–96 (SLGKTEPSRSRSYIKL). Residues 150–187 (ELFGARIHSHGNLAVSSALKDRFYIRHVFKRVISVEKD) form an interaction with Arabidopsis thaliana NSI protein region.

Belongs to the begomovirus nuclear shuttle protein family. Binds to single-stranded and double-stranded viral DNA. Interacts with the host nuclear shuttle interacting (NSI) protein. This interaction may allow NSP to recruit NSI monomers to the viral genome and thus regulate nuclear export of viral genome by NSP.

It localises to the host nucleus. It is found in the host cytoplasm. The protein localises to the host cell membrane. Its function is as follows. Binds to the genomic viral ssDNA, shuttles it into and out of the cell nucleus. Begomoviruses use 2 proteins to transport their DNA from cell to cell. The nuclear shuttle protein (NSP) shuttles it between nucleus and cytoplasm and the movement protein (MP) probably transports the DNA-NSP complex to the cell periphery and facilitates movement across the cell wall. This chain is Nuclear shuttle protein, found in Solanum lycopersicum (Tomato).